A 358-amino-acid polypeptide reads, in one-letter code: Magnesium-protoporphyrin IX monomethyl ester [oxidative] cyclase 2 (358 aa).

The protein belongs to the AcsF family. Fe cation is required as a cofactor.

The catalysed reaction is Mg-protoporphyrin IX 13-monomethyl ester + 3 NADPH + 3 O2 + 2 H(+) = 3,8-divinyl protochlorophyllide a + 3 NADP(+) + 5 H2O. It participates in porphyrin-containing compound metabolism; chlorophyll biosynthesis (light-independent). Functionally, catalyzes the formation of the isocyclic ring in chlorophyll biosynthesis. Mediates the cyclase reaction, which results in the formation of divinylprotochlorophyllide (Pchlide) characteristic of all chlorophylls from magnesium-protoporphyrin IX 13-monomethyl ester (MgPMME). This chain is Magnesium-protoporphyrin IX monomethyl ester [oxidative] cyclase 2, found in Synechocystis sp. (strain ATCC 27184 / PCC 6803 / Kazusa).